The sequence spans 398 residues: Protochlorophyllide reductase, chloroplastic (398 aa).

The transit peptide at methionine 1–glutamine 64 directs the protein to the chloroplast.

This sequence belongs to the short-chain dehydrogenases/reductases (SDR) family. POR subfamily.

The protein resides in the plastid. Its subcellular location is the chloroplast. The catalysed reaction is chlorophyllide a + NADP(+) = protochlorophyllide a + NADPH + H(+). It functions in the pathway porphyrin-containing compound metabolism; chlorophyll biosynthesis. Its function is as follows. Phototransformation of protochlorophyllide (Pchlide) to chlorophyllide (Chlide). The sequence is that of Protochlorophyllide reductase, chloroplastic (PORA) from Cucumis sativus (Cucumber).